Here is a 445-residue protein sequence, read N- to C-terminus: Gamma-glutamyl phosphate reductase (445 aa).

The protein belongs to the gamma-glutamyl phosphate reductase family.

It localises to the cytoplasm. It catalyses the reaction L-glutamate 5-semialdehyde + phosphate + NADP(+) = L-glutamyl 5-phosphate + NADPH + H(+). It participates in amino-acid biosynthesis; L-proline biosynthesis; L-glutamate 5-semialdehyde from L-glutamate: step 2/2. In terms of biological role, catalyzes the NADPH-dependent reduction of L-glutamate 5-phosphate into L-glutamate 5-semialdehyde and phosphate. The product spontaneously undergoes cyclization to form 1-pyrroline-5-carboxylate. In Persephonella marina (strain DSM 14350 / EX-H1), this protein is Gamma-glutamyl phosphate reductase.